The following is a 325-amino-acid chain: Putative gluconeogenesis factor (325 aa).

This sequence belongs to the gluconeogenesis factor family.

It localises to the cytoplasm. Its function is as follows. Required for morphogenesis under gluconeogenic growth conditions. In Streptococcus pneumoniae serotype 4 (strain ATCC BAA-334 / TIGR4), this protein is Putative gluconeogenesis factor.